A 513-amino-acid polypeptide reads, in one-letter code: Anthranilate synthase component 1 (513 aa).

Residues S50 and 279–281 each bind L-tryptophan; that span reads PYM. 314–315 lines the chorismate pocket; sequence GT. E341 contributes to the Mg(2+) binding site. Chorismate-binding positions include Y429, R449, 463–465, and G465; that span reads GAG. E478 is a Mg(2+) binding site.

The protein belongs to the anthranilate synthase component I family. In terms of assembly, heterotetramer consisting of two non-identical subunits: a beta subunit (TrpG) and a large alpha subunit (TrpE). Requires Mg(2+) as cofactor.

It carries out the reaction chorismate + L-glutamine = anthranilate + pyruvate + L-glutamate + H(+). It functions in the pathway amino-acid biosynthesis; L-tryptophan biosynthesis; L-tryptophan from chorismate: step 1/5. Its activity is regulated as follows. Feedback inhibited by tryptophan. In terms of biological role, part of a heterotetrameric complex that catalyzes the two-step biosynthesis of anthranilate, an intermediate in the biosynthesis of L-tryptophan. In the first step, the glutamine-binding beta subunit (TrpG) of anthranilate synthase (AS) provides the glutamine amidotransferase activity which generates ammonia as a substrate that, along with chorismate, is used in the second step, catalyzed by the large alpha subunit of AS (TrpE) to produce anthranilate. In the absence of TrpG, TrpE can synthesize anthranilate directly from chorismate and high concentrations of ammonia. This is Anthranilate synthase component 1 (trpE) from Bacillus pumilus (Bacillus mesentericus).